A 154-amino-acid chain; its full sequence is MAKKVVNVVKLQIAAAKATPAPPVGPALGQAGINIAQFTKEFNARTADQAGSIIPVEISVFDDRSFEFVTKTPPAADQLRKIVGKGSGEPNTKKAGNVTLDQIRAIAENKMSDLNANDITNAMRMIEGTARSMGVTVDGVDLTVEGTAIKEDAE.

Belongs to the universal ribosomal protein uL11 family. As to quaternary structure, part of the ribosomal stalk of the 50S ribosomal subunit. Interacts with L10 and the large rRNA to form the base of the stalk. L10 forms an elongated spine to which L12 dimers bind in a sequential fashion forming a multimeric L10(L12)X complex. One or more lysine residues are methylated.

Functionally, forms part of the ribosomal stalk which helps the ribosome interact with GTP-bound translation factors. The sequence is that of Large ribosomal subunit protein uL11 from Leuconostoc mesenteroides subsp. mesenteroides (strain ATCC 8293 / DSM 20343 / BCRC 11652 / CCM 1803 / JCM 6124 / NCDO 523 / NBRC 100496 / NCIMB 8023 / NCTC 12954 / NRRL B-1118 / 37Y).